The chain runs to 68 residues: DNA-directed RNA polymerase subunit omega (68 aa).

It belongs to the RNA polymerase subunit omega family. As to quaternary structure, the RNAP catalytic core consists of 2 alpha, 1 beta, 1 beta' and 1 omega subunit. When a sigma factor is associated with the core the holoenzyme is formed, which can initiate transcription.

The enzyme catalyses RNA(n) + a ribonucleoside 5'-triphosphate = RNA(n+1) + diphosphate. Functionally, promotes RNA polymerase assembly. Latches the N- and C-terminal regions of the beta' subunit thereby facilitating its interaction with the beta and alpha subunits. The chain is DNA-directed RNA polymerase subunit omega from Dechloromonas aromatica (strain RCB).